The following is a 660-amino-acid chain: Acetyl-coenzyme A synthetase (660 aa).

CoA contacts are provided by residues 197 to 200 and Thr-317; that span reads RGGK. Residues 397-399, 421-426, Asp-512, and Arg-528 each bind ATP; these read GEP and DTFWQT. Ser-536 is a binding site for CoA. Arg-539 serves as a coordination point for ATP. Residues Val-550 and Val-555 each coordinate Mg(2+). Lys-625 carries the N6-acetyllysine modification.

Belongs to the ATP-dependent AMP-binding enzyme family. Requires Mg(2+) as cofactor. Post-translationally, acetylated. Deacetylation by the SIR2-homolog deacetylase activates the enzyme.

It catalyses the reaction acetate + ATP + CoA = acetyl-CoA + AMP + diphosphate. Its function is as follows. Catalyzes the conversion of acetate into acetyl-CoA (AcCoA), an essential intermediate at the junction of anabolic and catabolic pathways. AcsA undergoes a two-step reaction. In the first half reaction, AcsA combines acetate with ATP to form acetyl-adenylate (AcAMP) intermediate. In the second half reaction, it can then transfer the acetyl group from AcAMP to the sulfhydryl group of CoA, forming the product AcCoA. This Cupriavidus taiwanensis (strain DSM 17343 / BCRC 17206 / CCUG 44338 / CIP 107171 / LMG 19424 / R1) (Ralstonia taiwanensis (strain LMG 19424)) protein is Acetyl-coenzyme A synthetase.